Consider the following 667-residue polypeptide: Acyl-coenzyme A oxidase acox-3 (667 aa).

Residues 138-141, 146-147, G178, R313, 334-337, and G410 contribute to the FAD site; these read FCLT, GS, and QQYR. The active-site Proton acceptor is E433. E435 contacts FAD. The short motif at 665 to 667 is the Microbody targeting signal element; the sequence is SKL.

Belongs to the acyl-CoA oxidase family. In terms of assembly, homodimer. It depends on FAD as a cofactor. As to expression, expressed in intestine.

It localises to the peroxisome. It carries out the reaction IC-asc-C7-CoA + O2 = IC-asc-DeltaC7-CoA + H2O2. It catalyses the reaction IC-asc-C9-CoA + O2 = IC-asc-DeltaC9-CoA + H2O2. The catalysed reaction is asc-C13-CoA + O2 = asc-DeltaC13-CoA + H2O2. It functions in the pathway lipid metabolism; peroxisomal fatty acid beta-oxidation. With respect to regulation, in contrast to other acyl-coenzyme A oxidases which bind to and are activated by ATP, does not bind ATP. In terms of biological role, involved in the first step of peroxisomal beta-oxidation by catalyzing the desaturation of fatty acid-derived side chains of ascaroside pheromones, which regulates development and behavior. Specifically, shortens indol-3-carbonyl(IC)-ascarosides with 7-carbon (IC-asc-C7) or 9-carbon (IC-asc-C9) side chains and contributes to the shortening of ascarosides with 13-carbon (asc-C13) and 15-carbon (asc-C15) side chains. The protein is Acyl-coenzyme A oxidase acox-3 of Caenorhabditis elegans.